Here is a 358-residue protein sequence, read N- to C-terminus: Putative ankyrin repeat protein FPV242 (358 aa).

ANK repeat units follow at residues 6 to 35 (NNYR…NMIV), 40 to 69 (NNHT…NLVY), 91 to 118 (TRRN…DKGV), 119 to 147 (ELTG…SVEY), 149 to 177 (GFFP…DINK), 180 to 209 (CGET…DIEK), 214 to 243 (EQDP…SIDT), 248 to 277 (NHKP…NPFI), 280 to 312 (EGNT…RLPG), and 316 to 345 (YYIQ…RITS).

This chain is Putative ankyrin repeat protein FPV242, found in Fowlpox virus (strain NVSL) (FPV).